We begin with the raw amino-acid sequence, 486 residues long: Pup--protein ligase (486 aa).

Glu33 contributes to the Mg(2+) binding site. Arg76 is a binding site for ATP. Tyr78 provides a ligand contact to Mg(2+). Asp80 acts as the Proton acceptor in catalysis. Glu86 is a binding site for Mg(2+). The ATP site is built by Thr89 and Trp451.

Belongs to the Pup ligase/Pup deamidase family. Pup-conjugating enzyme subfamily.

The enzyme catalyses ATP + [prokaryotic ubiquitin-like protein]-L-glutamate + [protein]-L-lysine = ADP + phosphate + N(6)-([prokaryotic ubiquitin-like protein]-gamma-L-glutamyl)-[protein]-L-lysine.. Its pathway is protein degradation; proteasomal Pup-dependent pathway. It participates in protein modification; protein pupylation. Its function is as follows. Catalyzes the covalent attachment of the prokaryotic ubiquitin-like protein modifier Pup to the proteasomal substrate proteins, thereby targeting them for proteasomal degradation. This tagging system is termed pupylation. The ligation reaction involves the side-chain carboxylate of the C-terminal glutamate of Pup and the side-chain amino group of a substrate lysine. The protein is Pup--protein ligase of Bifidobacterium longum (strain DJO10A).